A 354-amino-acid chain; its full sequence is UDP-3-O-acylglucosamine N-acyltransferase (354 aa).

His-250 (proton acceptor) is an active-site residue.

It belongs to the transferase hexapeptide repeat family. LpxD subfamily. As to quaternary structure, homotrimer.

It carries out the reaction a UDP-3-O-[(3R)-3-hydroxyacyl]-alpha-D-glucosamine + a (3R)-hydroxyacyl-[ACP] = a UDP-2-N,3-O-bis[(3R)-3-hydroxyacyl]-alpha-D-glucosamine + holo-[ACP] + H(+). It functions in the pathway bacterial outer membrane biogenesis; LPS lipid A biosynthesis. Functionally, catalyzes the N-acylation of UDP-3-O-acylglucosamine using 3-hydroxyacyl-ACP as the acyl donor. Is involved in the biosynthesis of lipid A, a phosphorylated glycolipid that anchors the lipopolysaccharide to the outer membrane of the cell. The chain is UDP-3-O-acylglucosamine N-acyltransferase from Methylococcus capsulatus (strain ATCC 33009 / NCIMB 11132 / Bath).